The following is a 390-amino-acid chain: Chorismate synthase 1 (390 aa).

2 residues coordinate NADP(+): R39 and R45. Residues 132-134 (RSS), 253-254 (NA), G298, 313-317 (KPIPT), and R339 contribute to the FMN site.

The protein belongs to the chorismate synthase family. As to quaternary structure, homotetramer. FMNH2 is required as a cofactor.

It catalyses the reaction 5-O-(1-carboxyvinyl)-3-phosphoshikimate = chorismate + phosphate. It participates in metabolic intermediate biosynthesis; chorismate biosynthesis; chorismate from D-erythrose 4-phosphate and phosphoenolpyruvate: step 7/7. Its function is as follows. Catalyzes the anti-1,4-elimination of the C-3 phosphate and the C-6 proR hydrogen from 5-enolpyruvylshikimate-3-phosphate (EPSP) to yield chorismate, which is the branch point compound that serves as the starting substrate for the three terminal pathways of aromatic amino acid biosynthesis. This reaction introduces a second double bond into the aromatic ring system. In Bacillus anthracis, this protein is Chorismate synthase 1.